A 447-amino-acid chain; its full sequence is MTRKYFGTDGVRGKVGDAPITPDFVMRLGHAAGKVLAHGARTGQGKPTVLIGKDTRISGYMLEAALEAGFTSAGVHVLLTGPLPTPGIAYLTRALRLSAGVVISASHNPYYDNGIKFFSASGDKLPDAVEAAIEAALDEPMVCAPSDDLGRARRIDDAAGRYIEFCKSTFPYEQDLHGLKLVVDCAHGAAYHIAPPVFHELGADVVAIGNQPNGRNINAGYGATAPEKLIEAVKANGADLGLAFDGDADRLQVVDADGRLYNGDELLYLIVRDRQAAGQAVPGAVGTLMTNMAVELALKREGVDFVRAKVGDRYVLEELNKRKWTLGGEGSGHLLCLDRHSTGDGIVSALQVLGALRRSGKTLAQLLDGVKLFPQTLINVRVQKGFDWQTHAGLQAARAAVEPELEGRGRVLIRASGTEPVVRVMVEAEQAEMAERAARKLADALGA.

Catalysis depends on Ser-106, which acts as the Phosphoserine intermediate. Mg(2+) is bound by residues Ser-106, Asp-245, Asp-247, and Asp-249. Phosphoserine is present on Ser-106.

This sequence belongs to the phosphohexose mutase family. Mg(2+) is required as a cofactor. In terms of processing, activated by phosphorylation.

It carries out the reaction alpha-D-glucosamine 1-phosphate = D-glucosamine 6-phosphate. Functionally, catalyzes the conversion of glucosamine-6-phosphate to glucosamine-1-phosphate. This Cupriavidus taiwanensis (strain DSM 17343 / BCRC 17206 / CCUG 44338 / CIP 107171 / LMG 19424 / R1) (Ralstonia taiwanensis (strain LMG 19424)) protein is Phosphoglucosamine mutase.